A 43-amino-acid polypeptide reads, in one-letter code: Defensin-B (43 aa).

3 disulfide bridges follow: C3/C34, C20/C39, and C24/C41.

It is found in the secreted. Its function is as follows. Antibacterial protein. Strong activity against the Gram-positive bacteria M.luteus, B.megaterium and S.aureus. Reduced activity against Gram-positive bacterium B.subtilis and weak activity against Gram-negative bacterium X.japonicus. No detectable activity against the Gram-negative bacteria E.asbriae, E.coli, P.aeruginosa and S.marcescens. The polypeptide is Defensin-B (Anomala cuprea (Cupreous chafer beetle)).